The primary structure comprises 276 residues: Mitochondrial outer membrane protein porin 2 (276 aa).

Position 76 is a phosphoserine (Ser-76). Residue Thr-236 is modified to Phosphothreonine.

It belongs to the eukaryotic mitochondrial porin (TC 1.B.8.1) family. In terms of tissue distribution, expressed in root tips, steles, leaves, sepals, petals, stamen and pistils.

It is found in the mitochondrion outer membrane. In terms of biological role, forms a channel through the mitochondrial outer membrane that allows diffusion of small hydrophilic molecules. The channel adopts an open conformation at low or zero membrane potential and a closed conformation at potentials above 30-40 mV. The open state has a weak anion selectivity whereas the closed state is cation-selective. Involved in plant growth and development at the vegetative and reproductive stages. Is important for leaf and pollen development and mitochondrial membrane potential steady state. May be involved in ABA-mediated early seedling development and disease resistance. In Arabidopsis thaliana (Mouse-ear cress), this protein is Mitochondrial outer membrane protein porin 2 (VDAC2).